We begin with the raw amino-acid sequence, 512 residues long: Probable malate:quinone oxidoreductase (512 aa).

Belongs to the MQO family. The cofactor is FAD.

The enzyme catalyses (S)-malate + a quinone = a quinol + oxaloacetate. Its pathway is carbohydrate metabolism; tricarboxylic acid cycle; oxaloacetate from (S)-malate (quinone route): step 1/1. This chain is Probable malate:quinone oxidoreductase, found in Bradyrhizobium diazoefficiens (strain JCM 10833 / BCRC 13528 / IAM 13628 / NBRC 14792 / USDA 110).